Here is a 215-residue protein sequence, read N- to C-terminus: Ribose-5-phosphate isomerase A (215 aa).

Residues 26–29 (TGST), 79–82 (DGAD), and 92–95 (KGGG) contribute to the substrate site. E101 functions as the Proton acceptor in the catalytic mechanism. K119 is a substrate binding site.

Belongs to the ribose 5-phosphate isomerase family. Homodimer.

The catalysed reaction is aldehydo-D-ribose 5-phosphate = D-ribulose 5-phosphate. It participates in carbohydrate degradation; pentose phosphate pathway; D-ribose 5-phosphate from D-ribulose 5-phosphate (non-oxidative stage): step 1/1. Its function is as follows. Catalyzes the reversible conversion of ribose-5-phosphate to ribulose 5-phosphate. This is Ribose-5-phosphate isomerase A from Xanthomonas campestris pv. campestris (strain 8004).